A 136-amino-acid chain; its full sequence is MYPLEVVTPEGIVFKGEVEQTVINTADGEIGILENHMLLLTNVVPGKLRIEIPEEEPKEYAVTHGVIDVRGDKVIVLVEEAFGISEIDVEREKRLLEEAKAKLEERETLSLEEIENYERMKERAEILLELAGVKVR.

The protein belongs to the ATPase epsilon chain family. F-type ATPases have 2 components, CF(1) - the catalytic core - and CF(0) - the membrane proton channel. CF(1) has five subunits: alpha(3), beta(3), gamma(1), delta(1), epsilon(1). CF(0) has three main subunits: a, b and c.

The protein resides in the cell inner membrane. Its function is as follows. Produces ATP from ADP in the presence of a proton gradient across the membrane. The sequence is that of ATP synthase epsilon chain from Persephonella marina (strain DSM 14350 / EX-H1).